Here is a 788-residue protein sequence, read N- to C-terminus: Serine/threonine-protein kinase MARK2 (788 aa).

The interval 1–46 (MSSARTPLPTLNERDTEQPTLGHLDSKPSSKSNMIRGRNSATSADE) is disordered. The segment covering 27–45 (KPSSKSNMIRGRNSATSAD) has biased composition (polar residues). Serine 40 carries the post-translational modification Phosphoserine. The 252-residue stretch at 53–304 (YRLLKTIGKG…LEQIMKDRWM (252 aa)) folds into the Protein kinase domain. Threonine 58 carries the post-translational modification Phosphothreonine; by autocatalysis. Residues 59 to 67 (IGKGNFAKV) and lysine 82 each bind ATP. Phosphoserine; by CaMK1 occurs at positions 91, 92, and 93. Aspartate 175 (proton acceptor) is an active-site residue. Threonine 208 carries the post-translational modification Phosphothreonine; by LKB1 and TAOK1. Serine 212 carries the phosphoserine; by GSK3-beta modification. The residue at position 274 (serine 274) is a Phosphoserine; by autocatalysis. Threonine 275 carries the phosphothreonine; by autocatalysis modification. A Phosphothreonine; by CaMK1 modification is found at threonine 294. Residues 323 to 362 (YKDPRRTELMVSMGYTREEIQDSLVGQRYNEVMATYLLLG) enclose the UBA domain. The interval 373-632 (ITLKPRPSAD…HSQGRRGASG (260 aa)) is disordered. Lysine 376 and serine 409 each carry phosphoserine. Positions 418 to 432 (PTSNSYSKKTQSNNA) are enriched in polar residues. Residues 433–445 (ENKRPEEDRESGR) show a composition bias toward basic and acidic residues. Serine 456 bears the Phosphoserine mark. Threonine 467 bears the Phosphothreonine mark. Positions 467–486 (TPTPSTNSVLSTSTNRSRNS) are enriched in polar residues. Phosphoserine is present on residues serine 486 and serine 493. A compositionally biased stretch (polar residues) spans 495-504 (GQASIQNGKD). The segment covering 511 to 525 (SRASTASASAAVSAA) has biased composition (low complexity). 3 positions are modified to phosphoserine: serine 569, serine 571, and serine 592. A Phosphothreonine; by PKC/PRKCZ modification is found at threonine 596. Phosphoserine is present on residues serine 619 and serine 722. In terms of domain architecture, KA1 spans 739–788 (TPGHEDFVQWEMEVCKLPRLSLNGVRFKRISGTSMAFKNIASKIANELKL).

Belongs to the protein kinase superfamily. CAMK Ser/Thr protein kinase family. SNF1 subfamily. Homodimer. Interacts with PAK5; leading to inhibit the protein kinase activity. Interacts with MAPT/TAU. Interacts with MTCL1 isoform 1; the interaction is direct and increases MARK2 microtubule-binding ability. Interacts (when phosphorylated at Thr-596) with YWHAZ. Interacts with YWHAB, YWHAG and YWHAQ. In terms of assembly, (Microbial infection) In case of infection, interacts with H.pylori CagA, leading to inhibit kinase activity and junctional and polarity defects. The cofactor is Mg(2+). Autophosphorylated. Phosphorylated at Thr-208 by STK11/LKB1 in complex with STE20-related adapter-alpha (STRADA) pseudo kinase and CAB39. Phosphorylation at Thr-208 by TAOK1 activates the kinase activity, leading to phosphorylation and detachment of MAPT/TAU from microtubules. Phosphorylation at Ser-212 by GSK3-beta (GSK3B) inhibits the kinase activity. Phosphorylation by CaMK1 promotes activity and is required to promote neurite outgrowth. Phosphorylation at Thr-596 by PRKCZ/aPKC in polarized epithelial cells inhibits the kinase activity and promotes binding to 14-3-3 protein YWHAZ, leading to relocation from cell membrane to cytoplasm. In terms of tissue distribution, high levels of expression in heart, brain, skeletal muscle and pancreas, lower levels observed in lung, liver and kidney.

It is found in the cell membrane. It localises to the cytoplasm. Its subcellular location is the lateral cell membrane. The protein localises to the cytoskeleton. The protein resides in the cell projection. It is found in the dendrite. It catalyses the reaction L-seryl-[protein] + ATP = O-phospho-L-seryl-[protein] + ADP + H(+). It carries out the reaction L-threonyl-[protein] + ATP = O-phospho-L-threonyl-[protein] + ADP + H(+). The enzyme catalyses L-seryl-[tau protein] + ATP = O-phospho-L-seryl-[tau protein] + ADP + H(+). The catalysed reaction is L-threonyl-[tau protein] + ATP = O-phospho-L-threonyl-[tau protein] + ADP + H(+). Inhibited by PAK5; inhibition is independent of the kinase activity of PAK5. Activated by phosphorylation on Thr-208. Inhibited by phosphorylation at Ser-212 and Thr-596. Inhibited by hymenialdisine. Specifically inhibited by the H.pylori CagA peptide FPLKRHDKVDDLSK that mimics host substrates and binds to the kinase substrate-binding site. Serine/threonine-protein kinase. Involved in cell polarity and microtubule dynamics regulation. Phosphorylates CRTC2/TORC2, DCX, HDAC7, KIF13B, MAP2, MAP4 and RAB11FIP2. Phosphorylates the microtubule-associated protein MAPT/TAU. Plays a key role in cell polarity by phosphorylating the microtubule-associated proteins MAP2, MAP4 and MAPT/TAU at KXGS motifs, causing detachment from microtubules, and their disassembly. Regulates epithelial cell polarity by phosphorylating RAB11FIP2. Involved in the regulation of neuronal migration through its dual activities in regulating cellular polarity and microtubule dynamics, possibly by phosphorylating and regulating DCX. Regulates axogenesis by phosphorylating KIF13B, promoting interaction between KIF13B and 14-3-3 and inhibiting microtubule-dependent accumulation of KIF13B. Also required for neurite outgrowth and establishment of neuronal polarity. Regulates localization and activity of some histone deacetylases by mediating phosphorylation of HDAC7, promoting subsequent interaction between HDAC7 and 14-3-3 and export from the nucleus. Also acts as a positive regulator of the Wnt signaling pathway, probably by mediating phosphorylation of dishevelled proteins (DVL1, DVL2 and/or DVL3). Modulates the developmental decision to build a columnar versus a hepatic epithelial cell apparently by promoting a switch from a direct to a transcytotic mode of apical protein delivery. Essential for the asymmetric development of membrane domains of polarized epithelial cells. In Homo sapiens (Human), this protein is Serine/threonine-protein kinase MARK2.